A 363-amino-acid chain; its full sequence is Uroporphyrinogen decarboxylase (363 aa).

Residues 27-31 (RQAGR), Asp-77, Tyr-157, Thr-212, and His-333 each bind substrate.

It belongs to the uroporphyrinogen decarboxylase family. In terms of assembly, homodimer.

The protein localises to the cytoplasm. It catalyses the reaction uroporphyrinogen III + 4 H(+) = coproporphyrinogen III + 4 CO2. It participates in porphyrin-containing compound metabolism; protoporphyrin-IX biosynthesis; coproporphyrinogen-III from 5-aminolevulinate: step 4/4. Catalyzes the decarboxylation of four acetate groups of uroporphyrinogen-III to yield coproporphyrinogen-III. The polypeptide is Uroporphyrinogen decarboxylase (Cupriavidus pinatubonensis (strain JMP 134 / LMG 1197) (Cupriavidus necator (strain JMP 134))).